A 269-amino-acid chain; its full sequence is Probable molybdenum ABC transporter permease protein HVO_B0370 (269 aa).

6 consecutive transmembrane segments (helical) span residues 26–46 (LLLAGVLLLYYLLPIGALVFA), 69–89 (VVAATLSTLVAVAFGVPLAYW), 100–120 (VILALVMLPLVLPPVVSGMLL), 140–160 (SLFGVVLAQTYVASPFLVVTA), 198–218 (ILAGVTLTFARAIGEFGATLM), and 243–263 (FPVALVLVGIAVGAILLVHAL). Residues 65-258 (ATNSVVAATL…LVGIAVGAIL (194 aa)) form the ABC transmembrane type-1 domain.

Belongs to the binding-protein-dependent transport system permease family. As to quaternary structure, the complex is composed of two ATP-binding proteins, two transmembrane proteins (HVO_B0370) and a solute-binding protein (HVO_B0369).

The protein resides in the cell membrane. In terms of biological role, part of an ABC transporter complex involved in molybdenum import. Responsible for the translocation of the substrate across the membrane. This chain is Probable molybdenum ABC transporter permease protein HVO_B0370, found in Haloferax volcanii (strain ATCC 29605 / DSM 3757 / JCM 8879 / NBRC 14742 / NCIMB 2012 / VKM B-1768 / DS2) (Halobacterium volcanii).